Consider the following 459-residue polypeptide: Asperlicin C monooxygenase (459 aa).

FAD contacts are provided by Asp49, Ala62, and Arg121. Residue Arg199 is part of the active site. Residues Asp323 and Ala336 each coordinate FAD.

Belongs to the paxM FAD-dependent monooxygenase family. It depends on FAD as a cofactor.

The catalysed reaction is asperlicin C + NADPH + O2 + H(+) = asperlicin E + NADP(+) + H2O. The enzyme catalyses asperlicin C + NADH + O2 + H(+) = asperlicin E + NAD(+) + H2O. In terms of biological role, catalyzes the conversion of asperlicin A to form asperlicin E, a potent cholecystokinin receptor CCK(A) antagonist. The chain is Asperlicin C monooxygenase from Petromyces alliaceus (Aspergillus alliaceus).